The primary structure comprises 130 residues: UPF0102 protein BT_1882 (130 aa).

The protein belongs to the UPF0102 family.

The sequence is that of UPF0102 protein BT_1882 from Bartonella tribocorum (strain CIP 105476 / IBS 506).